The chain runs to 578 residues: Kelch repeat-containing protein kel-10 (578 aa).

The BTB domain occupies 51-118 (PTVTLVLRNN…PKAFEQGIKP (68 aa)). Residues 158 to 236 (IKIFRLALLY…NSPLQSDRMA (79 aa)) form the BACK domain. Kelch repeat units follow at residues 265 to 315 (AIVC…VVED), 316 to 362 (KLIV…RIND), 368 to 414 (LIFA…TIDN), 416 to 462 (IVVI…SIMN), 464 to 510 (VCMI…QMDT), and 512 to 558 (SIYV…TLSD).

The chain is Kelch repeat-containing protein kel-10 from Caenorhabditis elegans.